The primary structure comprises 287 residues: Pyridoxal kinase PdxY (287 aa).

Residues serine 9 and 44-45 (MQ) each bind substrate. 4 residues coordinate ATP: aspartate 111, alanine 142, glutamate 147, and lysine 180. Substrate is bound at residue aspartate 221.

This sequence belongs to the pyridoxine kinase family. PdxY subfamily. Homodimer. It depends on Mg(2+) as a cofactor.

The catalysed reaction is pyridoxal + ATP = pyridoxal 5'-phosphate + ADP + H(+). It functions in the pathway cofactor metabolism; pyridoxal 5'-phosphate salvage; pyridoxal 5'-phosphate from pyridoxal: step 1/1. Functionally, pyridoxal kinase involved in the salvage pathway of pyridoxal 5'-phosphate (PLP). Catalyzes the phosphorylation of pyridoxal to PLP. The sequence is that of Pyridoxal kinase PdxY from Burkholderia thailandensis (strain ATCC 700388 / DSM 13276 / CCUG 48851 / CIP 106301 / E264).